We begin with the raw amino-acid sequence, 209 residues long: Uracil phosphoribosyltransferase (209 aa).

Residues Arg-79, Arg-104, and 131-139 contribute to the 5-phospho-alpha-D-ribose 1-diphosphate site; that span reads DPMLATGGS. Uracil is bound by residues Ile-194 and 199–201; that span reads GDA. A 5-phospho-alpha-D-ribose 1-diphosphate-binding site is contributed by Asp-200.

The protein belongs to the UPRTase family. Mg(2+) serves as cofactor.

The catalysed reaction is UMP + diphosphate = 5-phospho-alpha-D-ribose 1-diphosphate + uracil. It participates in pyrimidine metabolism; UMP biosynthesis via salvage pathway; UMP from uracil: step 1/1. With respect to regulation, allosterically activated by GTP. In terms of biological role, catalyzes the conversion of uracil and 5-phospho-alpha-D-ribose 1-diphosphate (PRPP) to UMP and diphosphate. The chain is Uracil phosphoribosyltransferase from Bacillus pumilus (strain SAFR-032).